Reading from the N-terminus, the 507-residue chain is Histidine ammonia-lyase (507 aa).

A cross-link (5-imidazolinone (Ala-Gly)) is located at residues 145–147 (ASG). Ser-146 is modified (2,3-didehydroalanine (Ser)).

Belongs to the PAL/histidase family. Contains an active site 4-methylidene-imidazol-5-one (MIO), which is formed autocatalytically by cyclization and dehydration of residues Ala-Ser-Gly.

The protein localises to the cytoplasm. The catalysed reaction is L-histidine = trans-urocanate + NH4(+). It participates in amino-acid degradation; L-histidine degradation into L-glutamate; N-formimidoyl-L-glutamate from L-histidine: step 1/3. The chain is Histidine ammonia-lyase from Treponema denticola (strain ATCC 35405 / DSM 14222 / CIP 103919 / JCM 8153 / KCTC 15104).